Here is a 454-residue protein sequence, read N- to C-terminus: uncharacterized protein (454 aa).

The region spanning 1–45 is the TRAM domain; sequence MAAEGKAIAKVNDLVIFVPYVVPGDVVDLQIKRKKNKYAEAEAVK. [4Fe-4S] cluster contacts are provided by cysteine 58, cysteine 64, cysteine 67, and cysteine 160. Residues glutamine 286, tyrosine 315, glutamate 336, and aspartate 385 each coordinate S-adenosyl-L-methionine. Cysteine 412 (nucleophile) is an active-site residue.

Belongs to the class I-like SAM-binding methyltransferase superfamily. RNA M5U methyltransferase family.

This is an uncharacterized protein from Bacteroides thetaiotaomicron (strain ATCC 29148 / DSM 2079 / JCM 5827 / CCUG 10774 / NCTC 10582 / VPI-5482 / E50).